Reading from the N-terminus, the 533-residue chain is DNA primase large subunit (533 aa).

Positions 298, 377, 393, and 433 each coordinate [4Fe-4S] cluster. Residues 466–492 (RQKRANGSAPPKARIRPDIKGHGDRSM) form a disordered region. The span at 480–490 (IRPDIKGHGDR) shows a compositional bias: basic and acidic residues.

It belongs to the eukaryotic-type primase large subunit family. As to quaternary structure, heterodimer of a catalytic subunit Prim1 and a regulatory subunit Prim2, also known as the DNA primase complex. Component of the alpha DNA polymerase complex (also known as the alpha DNA polymerase-primase complex) consisting of four subunits: the catalytic subunit PolA1, the regulatory subunit PolA2, and the primase complex subunits Prim1 and Prim2 respectively. PolA1 associates with the DNA primase complex before association with PolA2. [4Fe-4S] cluster serves as cofactor. In terms of tissue distribution, expressed in embryos (at protein level).

In terms of biological role, regulatory subunit of the DNA primase complex and component of the DNA polymerase alpha complex (also known as the alpha DNA polymerase-primase complex) which play an essential role in the initiation of DNA synthesis. During the S phase of the cell cycle, the DNA polymerase alpha complex (composed of a catalytic subunit PolA1, an accessory subunit PolA2 and two primase subunits, the catalytic subunit Prim1 and the regulatory subunit Prim2) is recruited to DNA at the replicative forks. The primase subunit of the polymerase alpha complex initiates DNA synthesis by oligomerising short RNA primers on both leading and lagging strands. These primers are initially extended by the polymerase alpha catalytic subunit and subsequently transferred to polymerase delta and polymerase epsilon for processive synthesis on the lagging and leading strand, respectively. In the primase complex, both subunits are necessary for the initial di-nucleotide formation, but the extension of the primer depends only on the catalytic subunit. Stabilizes and modulates the activity of the catalytic subunit. The polypeptide is DNA primase large subunit (Drosophila melanogaster (Fruit fly)).